The sequence spans 248 residues: PF03932 family protein CutC (248 aa).

This sequence belongs to the CutC family. In terms of assembly, homodimer.

Its subcellular location is the cytoplasm. This Escherichia coli O127:H6 (strain E2348/69 / EPEC) protein is PF03932 family protein CutC.